The primary structure comprises 90 residues: Long neurotoxin 7 (90 aa).

A signal peptide spans 1 to 21 (MKTLLLTLVLVTIMCLDLGYT). 5 cysteine pairs are disulfide-bonded: Cys24–Cys41, Cys35–Cys62, Cys47–Cys51, Cys66–Cys77, and Cys78–Cys83.

This sequence belongs to the three-finger toxin family. Long-chain subfamily. Type II alpha-neurotoxin sub-subfamily. As to expression, expressed by the venom gland.

It localises to the secreted. Functionally, binds with high affinity to muscular (alpha-1/CHRNA1) and neuronal (alpha-7/CHRNA7) nicotinic acetylcholine receptor (nAChR) and inhibits acetylcholine from binding to the receptor, thereby impairing neuromuscular and neuronal transmission. The chain is Long neurotoxin 7 from Naja sputatrix (Malayan spitting cobra).